The following is a 91-amino-acid chain: Cell division protein FtsB (91 aa).

Over 1-3 (MKF) the chain is Cytoplasmic. The chain crosses the membrane as a helical span at residues 4-21 (IVGLLLVLLLALQYQLWI). At 22–91 (SKDGLGELRQ…ETFFQVVEEP (70 aa)) the chain is on the periplasmic side. Positions 26–74 (LGELRQLSRSIKQQRHENATLIERNQVLKAEVQDLKSGLDALEERARSG) form a coiled coil.

This sequence belongs to the FtsB family. Part of a complex composed of FtsB, FtsL and FtsQ.

Its subcellular location is the cell inner membrane. In terms of biological role, essential cell division protein. May link together the upstream cell division proteins, which are predominantly cytoplasmic, with the downstream cell division proteins, which are predominantly periplasmic. The chain is Cell division protein FtsB from Nitrosococcus oceani (strain ATCC 19707 / BCRC 17464 / JCM 30415 / NCIMB 11848 / C-107).